Here is a 278-residue protein sequence, read N- to C-terminus: uncharacterized protein (278 aa).

It belongs to the manganese catalase family.

This is an uncharacterized protein from Bacillus subtilis (strain 168).